The sequence spans 337 residues: ATP-dependent 6-phosphofructokinase (337 aa).

An ATP-binding site is contributed by Gly-11. 21–25 (RAVVR) contributes to the ADP binding site. Residues 72–73 (RY) and 102–105 (GDGS) each bind ATP. A Mg(2+)-binding site is contributed by Asp-103. 125–127 (TID) contributes to the substrate binding site. The active-site Proton acceptor is the Asp-127. Arg-154 contributes to the ADP binding site. Residues Arg-162 and 169 to 171 (MGR) each bind substrate. ADP is bound by residues 185–187 (GAD) and 214–216 (KNH). Residues Glu-223, Arg-245, and 251–254 (HILR) contribute to the substrate site.

The protein belongs to the phosphofructokinase type A (PFKA) family. ATP-dependent PFK group I subfamily. Prokaryotic clade 'B1' sub-subfamily. As to quaternary structure, homotetramer. Mg(2+) serves as cofactor.

It is found in the cytoplasm. The catalysed reaction is beta-D-fructose 6-phosphate + ATP = beta-D-fructose 1,6-bisphosphate + ADP + H(+). It participates in carbohydrate degradation; glycolysis; D-glyceraldehyde 3-phosphate and glycerone phosphate from D-glucose: step 3/4. With respect to regulation, allosterically activated by ADP and other diphosphonucleosides, and allosterically inhibited by phosphoenolpyruvate. Catalyzes the phosphorylation of D-fructose 6-phosphate to fructose 1,6-bisphosphate by ATP, the first committing step of glycolysis. This Streptococcus mutans serotype c (strain ATCC 700610 / UA159) protein is ATP-dependent 6-phosphofructokinase.